A 216-amino-acid polypeptide reads, in one-letter code: UPF0502 protein VPA1223 (216 aa).

The protein belongs to the UPF0502 family.

This is UPF0502 protein VPA1223 from Vibrio parahaemolyticus serotype O3:K6 (strain RIMD 2210633).